The primary structure comprises 121 residues: Dihydroneopterin aldolase (121 aa).

Residues Glu-22, Tyr-54, and 73–74 (IE) contribute to the substrate site. Residue Lys-100 is the Proton donor/acceptor of the active site.

It belongs to the DHNA family. As to quaternary structure, homooctamer. Four molecules assemble into a ring, and two rings come together to give a cylinder with a hole of at least 13 a diameter.

The catalysed reaction is 7,8-dihydroneopterin = 6-hydroxymethyl-7,8-dihydropterin + glycolaldehyde. The enzyme catalyses 7,8-dihydroneopterin = 7,8-dihydromonapterin. Its pathway is cofactor biosynthesis; tetrahydrofolate biosynthesis; 2-amino-4-hydroxy-6-hydroxymethyl-7,8-dihydropteridine diphosphate from 7,8-dihydroneopterin triphosphate: step 3/4. In terms of biological role, catalyzes the conversion of 7,8-dihydroneopterin to 6-hydroxymethyl-7,8-dihydropterin. Can also catalyze the epimerization of carbon 2' of dihydroneopterin to dihydromonapterin. The polypeptide is Dihydroneopterin aldolase (folB) (Staphylococcus epidermidis (strain ATCC 35984 / DSM 28319 / BCRC 17069 / CCUG 31568 / BM 3577 / RP62A)).